The following is a 152-amino-acid chain: Ribonuclease H (152 aa).

The RNase H type-1 domain occupies 4-145; it reads SRSMVEIFSD…CDELARQAIA (142 aa). The Mg(2+) site is built by Asp-13, Glu-51, Asp-73, and Asp-137.

The protein belongs to the RNase H family. Monomer. It depends on Mg(2+) as a cofactor.

It localises to the cytoplasm. It carries out the reaction Endonucleolytic cleavage to 5'-phosphomonoester.. Functionally, endonuclease that specifically degrades the RNA of RNA-DNA hybrids. The protein is Ribonuclease H of Syntrophotalea carbinolica (strain DSM 2380 / NBRC 103641 / GraBd1) (Pelobacter carbinolicus).